The sequence spans 118 residues: NADH-ubiquinone oxidoreductase chain 3 (118 aa).

3 helical membrane passes run 9–29, 62–82, and 87–107; these read IYLV…FLFA, LVSI…PWAV, and IDLF…IGFL.

Belongs to the complex I subunit 3 family.

The protein localises to the mitochondrion membrane. It catalyses the reaction a ubiquinone + NADH + 5 H(+)(in) = a ubiquinol + NAD(+) + 4 H(+)(out). Its function is as follows. Core subunit of the mitochondrial membrane respiratory chain NADH dehydrogenase (Complex I) that is believed to belong to the minimal assembly required for catalysis. Complex I functions in the transfer of electrons from NADH to the respiratory chain. The immediate electron acceptor for the enzyme is believed to be ubiquinone. The chain is NADH-ubiquinone oxidoreductase chain 3 (NAD3) from Pinus sylvestris (Scotch pine).